A 245-amino-acid chain; its full sequence is 1-(5-phosphoribosyl)-5-[(5-phosphoribosylamino)methylideneamino] imidazole-4-carboxamide isomerase (245 aa).

The active-site Proton acceptor is the Asp-8. Asp-129 (proton donor) is an active-site residue.

Belongs to the HisA/HisF family.

The protein localises to the cytoplasm. It carries out the reaction 1-(5-phospho-beta-D-ribosyl)-5-[(5-phospho-beta-D-ribosylamino)methylideneamino]imidazole-4-carboxamide = 5-[(5-phospho-1-deoxy-D-ribulos-1-ylimino)methylamino]-1-(5-phospho-beta-D-ribosyl)imidazole-4-carboxamide. It functions in the pathway amino-acid biosynthesis; L-histidine biosynthesis; L-histidine from 5-phospho-alpha-D-ribose 1-diphosphate: step 4/9. In Pelobacter propionicus (strain DSM 2379 / NBRC 103807 / OttBd1), this protein is 1-(5-phosphoribosyl)-5-[(5-phosphoribosylamino)methylideneamino] imidazole-4-carboxamide isomerase.